Reading from the N-terminus, the 154-residue chain is Putative ankyrin repeat protein RBE_1220 (154 aa).

2 ANK repeats span residues 78–108 (EKVNILNVAAANNSVTVINYLLDNNIFNVDQ) and 113–142 (NSRTALHSAVKENAMESTKFLLKKEQILIL).

This chain is Putative ankyrin repeat protein RBE_1220, found in Rickettsia bellii (strain RML369-C).